The chain runs to 113 residues: Large ribosomal subunit protein uL22 (113 aa).

It belongs to the universal ribosomal protein uL22 family. Part of the 50S ribosomal subunit.

Its function is as follows. This protein binds specifically to 23S rRNA; its binding is stimulated by other ribosomal proteins, e.g. L4, L17, and L20. It is important during the early stages of 50S assembly. It makes multiple contacts with different domains of the 23S rRNA in the assembled 50S subunit and ribosome. The globular domain of the protein is located near the polypeptide exit tunnel on the outside of the subunit, while an extended beta-hairpin is found that lines the wall of the exit tunnel in the center of the 70S ribosome. This Geobacillus stearothermophilus (Bacillus stearothermophilus) protein is Large ribosomal subunit protein uL22.